Reading from the N-terminus, the 159-residue chain is MKYRIISVGRIRESFYLEGVREYLKRLGPYTSIELIDGLEEKIGPRAGEKEIQAILQKEAEKIRRWLDKDEILVVLDLEGQVRSSEEMARQLEKWNASGKSRVTFLLGAAHGLANEIKQQAQETISLSRLTFPHQMAVLILAEQIYRGFKILKGEPYHR.

Residues Leu-76, Gly-108, and 127–132 (LSRLTF) contribute to the S-adenosyl-L-methionine site.

The protein belongs to the RNA methyltransferase RlmH family. Homodimer.

The protein resides in the cytoplasm. The enzyme catalyses pseudouridine(1915) in 23S rRNA + S-adenosyl-L-methionine = N(3)-methylpseudouridine(1915) in 23S rRNA + S-adenosyl-L-homocysteine + H(+). Specifically methylates the pseudouridine at position 1915 (m3Psi1915) in 23S rRNA. The polypeptide is Ribosomal RNA large subunit methyltransferase H (Syntrophomonas wolfei subsp. wolfei (strain DSM 2245B / Goettingen)).